The sequence spans 306 residues: Homoserine kinase (306 aa).

91–101 (PLARGLGSSAT) provides a ligand contact to ATP.

The protein belongs to the GHMP kinase family. Homoserine kinase subfamily.

The protein localises to the cytoplasm. The catalysed reaction is L-homoserine + ATP = O-phospho-L-homoserine + ADP + H(+). Its pathway is amino-acid biosynthesis; L-threonine biosynthesis; L-threonine from L-aspartate: step 4/5. Functionally, catalyzes the ATP-dependent phosphorylation of L-homoserine to L-homoserine phosphate. In Synechocystis sp. (strain ATCC 27184 / PCC 6803 / Kazusa), this protein is Homoserine kinase.